The following is a 134-amino-acid chain: Small ribosomal subunit protein uS8c (134 aa).

It belongs to the universal ribosomal protein uS8 family. In terms of assembly, part of the 30S ribosomal subunit.

The protein localises to the plastid. The protein resides in the chloroplast. In terms of biological role, one of the primary rRNA binding proteins, it binds directly to 16S rRNA central domain where it helps coordinate assembly of the platform of the 30S subunit. The protein is Small ribosomal subunit protein uS8c (rps8) of Draba nemorosa (Woodland whitlowgrass).